The following is a 763-amino-acid chain: Protein translocase subunit SecA 2 (763 aa).

Residues glutamine 83, 101–105, and aspartate 490 each bind ATP; that span reads GEGKT.

Belongs to the SecA family. As to quaternary structure, monomer and homodimer. Part of the essential Sec protein translocation apparatus which comprises SecA, SecYEG and auxiliary proteins SecDF. Other proteins may also be involved.

The protein localises to the cell membrane. The protein resides in the cytoplasm. The enzyme catalyses ATP + H2O + cellular proteinSide 1 = ADP + phosphate + cellular proteinSide 2.. Part of the Sec protein translocase complex. Interacts with the SecYEG preprotein conducting channel. Has a central role in coupling the hydrolysis of ATP to the transfer of proteins into and across the cell membrane, serving as an ATP-driven molecular motor driving the stepwise translocation of polypeptide chains across the membrane. This Corynebacterium glutamicum (strain ATCC 13032 / DSM 20300 / JCM 1318 / BCRC 11384 / CCUG 27702 / LMG 3730 / NBRC 12168 / NCIMB 10025 / NRRL B-2784 / 534) protein is Protein translocase subunit SecA 2.